We begin with the raw amino-acid sequence, 229 residues long: C-type lectin domain family 1 member B (229 aa).

The Cytoplasmic portion of the chain corresponds to 1–33; sequence MQDEDGYITLNIKTRKPALISVGSASSSWWRVM. At tyrosine 7 the chain carries Phosphotyrosine. An ITAM motif is present at residues 7–10; sequence YITL. The helical; Signal-anchor for type II membrane protein transmembrane segment at 34-54 threads the bilayer; the sequence is ALILLILCVGMVVGLVALGIW. Residues 55–229 are Extracellular-facing; that stretch reads SVMQRNYLQG…AGMTKVDQLP (175 aa). A glycan (N-linked (GlcNAc...) asparagine) is linked at asparagine 68. Residues cysteine 102 and cysteine 113 are joined by a disulfide bond. A C-type lectin domain is found at 109 to 217; it reads YGDSCYGFFR…CENKHYLMCE (109 aa). Residues asparagine 120 and asparagine 134 are each glycosylated (N-linked (GlcNAc...) asparagine). 2 disulfides stabilise this stretch: cysteine 130–cysteine 216 and cysteine 195–cysteine 208.

As to quaternary structure, homodimer. Interacts (via cytoplasmic domain) with RACK1; promotes CLEC1B ubiquitination and proteasome-mediated degradation. Interacts (dimer) with SYK (via SH2 domains). Interacts with PDPN; the interaction is independent of CLEC1B glycosylation and activates CLEC1B. Post-translationally, glycosylated. In terms of processing, phosphorylated on tyrosine residue in response to rhodocytin binding. As to expression, expressed preferentially in the liver. Also expressed in immune cells of myeloid origin and on the surface of platelets.

Its subcellular location is the membrane. Functionally, C-type lectin-like receptor that functions as a platelet receptor for the lymphatic endothelial marker, PDPN. After ligand activation, signals via sequential activation of SRC and SYK tyrosine kinases leading to activation of PLCG2. In terms of biological role, (Microbial infection) Acts as a receptor for the platelet-aggregating snake venom protein rhodocytin. Rhodocytin binding leads to tyrosine phosphorylation and this promotes the binding of spleen tyrosine kinase (SYK) and initiation of downstream tyrosine phosphorylation events and activation of PLCG2. Its function is as follows. (Microbial infection) Acts as an attachment factor for Human immunodeficiency virus type 1 (HIV-1) and facilitates its capture by platelets. The protein is C-type lectin domain family 1 member B (CLEC1B) of Homo sapiens (Human).